The primary structure comprises 254 residues: UPF0328 protein ECU01_0070/ECU01_1540/ECU02_1570/ECU04_0080/ECU08_2100 (254 aa).

Belongs to the UPF0328 family.

The sequence is that of UPF0328 protein ECU01_0070/ECU01_1540/ECU02_1570/ECU04_0080/ECU08_2100 from Encephalitozoon cuniculi (strain GB-M1) (Microsporidian parasite).